Reading from the N-terminus, the 910-residue chain is DNA mismatch repair protein MutS (910 aa).

The segment covering 1 to 11 (MEAKVEEKEPE) has biased composition (basic and acidic residues). Residues 1–21 (MEAKVEEKEPEPVENAGPDAP) are disordered. 658–665 (GPNMGGKS) is an ATP binding site.

The protein belongs to the DNA mismatch repair MutS family.

Its function is as follows. This protein is involved in the repair of mismatches in DNA. It is possible that it carries out the mismatch recognition step. This protein has a weak ATPase activity. The protein is DNA mismatch repair protein MutS of Brucella melitensis biotype 1 (strain ATCC 23456 / CCUG 17765 / NCTC 10094 / 16M).